Reading from the N-terminus, the 443-residue chain is Glutamate-1-semialdehyde 2,1-aminomutase (443 aa).

Lys-272 is subject to N6-(pyridoxal phosphate)lysine.

The protein belongs to the class-III pyridoxal-phosphate-dependent aminotransferase family. HemL subfamily. Homodimer. It depends on pyridoxal 5'-phosphate as a cofactor.

It localises to the cytoplasm. It carries out the reaction (S)-4-amino-5-oxopentanoate = 5-aminolevulinate. It functions in the pathway porphyrin-containing compound metabolism; protoporphyrin-IX biosynthesis; 5-aminolevulinate from L-glutamyl-tRNA(Glu): step 2/2. The protein operates within porphyrin-containing compound metabolism; chlorophyll biosynthesis. The polypeptide is Glutamate-1-semialdehyde 2,1-aminomutase (Chloroflexus aurantiacus (strain ATCC 29366 / DSM 635 / J-10-fl)).